A 276-amino-acid chain; its full sequence is ESX-2 secretion-associated protein EspG2 (276 aa).

Belongs to the EspG family. Interacts specifically with ESX-2-dependent PE/PPE proteins.

The protein resides in the cytoplasm. In terms of biological role, specific chaperone for cognate PE/PPE proteins. Plays an important role in preventing aggregation of PE/PPE dimers. This Mycobacterium tuberculosis (strain CDC 1551 / Oshkosh) protein is ESX-2 secretion-associated protein EspG2.